Consider the following 320-residue polypeptide: MGELFKWPSFSPFVPFHVSAGQTVIRKFGGLLTCEFLPPPPGRSFMMRQTYRHSVEGPIPENLRKLIESDHRPDGPPMHFHQWQTEYFKVEEGICVVEVNGKQTMLTPDDEEISCKAGNIHRFFIHPDSRERMTVILSASDSGVDYQLDRVFFENWYGYWHDALLYQGGLDFIQTLCIHDAGDHYTPGPAWLPFRRFIGYWMCVVIGRWIGGLLGYKPFFREYTTDWDFAVTKMKANPWTRRLVNDSYANKKSWDEQVELSSRPKAQNADYELLVTDITEENRRKKANGATNGHAKLANGTATGVAVEVKENGEELRKRS.

N-linked (GlcNAc...) asparagine glycosylation is found at Asn245 and Asn299.

It participates in secondary metabolite biosynthesis. Functionally, epoxidase; part of the gene cluster that mediates the biosynthesis of terreic acid, a quinone epoxide inhibitor of Bruton's tyrosine kinase. The first step of the pathway is the synthesis of 6-methylsalicylic acid (6-MSA) by the 6-methylsalicylic acid synthase atX. In the biosynthesis of 6-MSA, atX utilizes one acetyl-CoA and three malonyl-CoAs as its substrates and catalyzes a series of programmed reactions including Claisen condensation, reduction, aldol cyclization, and the hydrolytic cleavage that yields 6-MSA. The 6-methylsalicylate 1-monooxygenase atA then catalyzes the decarboxylative hydroxylation of 6-MSA to 3-methylcatechol. The next step is the conversion of 3-methylcatechol to 3-methyl-1,2,4-benzenetriol by cytochrome P450 monooxygenase atE, which is enhanced by cytochrome P450 monooxygenase atG. Then, the epoxidase atD catalyzes the epoxidation and hydroxyl oxidation of 3-methyl-1,2,4-benzenetriol to terremutin. Lastly, GMC oxidoreductase atC oxidizes terremutin to terreic acid. This Aspergillus terreus (strain NIH 2624 / FGSC A1156) protein is Epoxidase atD.